The sequence spans 336 residues: DNA-directed RNA polymerase subunit alpha (336 aa).

An alpha N-terminal domain (alpha-NTD) region spans residues 1–232; it reads MIQKNWQELI…DQLGVFVNFD (232 aa). An alpha C-terminal domain (alpha-CTD) region spans residues 248-336; that stretch reads FNPALLKKVD…DLAKRYEDQY (89 aa).

It belongs to the RNA polymerase alpha chain family. In terms of assembly, homodimer. The RNAP catalytic core consists of 2 alpha, 1 beta, 1 beta' and 1 omega subunit. When a sigma factor is associated with the core the holoenzyme is formed, which can initiate transcription.

The catalysed reaction is RNA(n) + a ribonucleoside 5'-triphosphate = RNA(n+1) + diphosphate. Functionally, DNA-dependent RNA polymerase catalyzes the transcription of DNA into RNA using the four ribonucleoside triphosphates as substrates. The polypeptide is DNA-directed RNA polymerase subunit alpha (Rhizobium radiobacter (Agrobacterium tumefaciens)).